The primary structure comprises 593 residues: Probable serine/threonine-protein kinase fhkA (593 aa).

A disordered region spans residues 1-24 (MSQTNYIPSTPNKSTPPSELSSTP). Residues 54–111 (ITIGRSKTCNIVVPELIVSGKHCIITRADAIENGNTNYGLLMIQDQSTNGTFINGKLI) enclose the FHA domain. The 293-residue stretch at 180-472 (YDFIKELGSG…VEQALNHPWI (293 aa)) folds into the Protein kinase domain. ATP contacts are provided by residues 186-194 (LGSGNFSVV) and lysine 209. The active-site Proton acceptor is the aspartate 307.

This sequence belongs to the protein kinase superfamily. CAMK Ser/Thr protein kinase family. CHK2 subfamily.

It carries out the reaction L-seryl-[protein] + ATP = O-phospho-L-seryl-[protein] + ADP + H(+). The catalysed reaction is L-threonyl-[protein] + ATP = O-phospho-L-threonyl-[protein] + ADP + H(+). The protein is Probable serine/threonine-protein kinase fhkA (fhkA) of Dictyostelium discoideum (Social amoeba).